A 181-amino-acid polypeptide reads, in one-letter code: MPLRVKLDKNDLSKNTASVKFTDKPYLVANKIIKSLEFNATSLYRCIKKNKLRSENFSVQLSRRLLRTKKTLVLPSHVNITLISNSYDVILSWFIPALGIKIDCVXGRATHHTFYCDSVGFYYGQCAEICGRYHHHMPIKLCILPFEHFLIWWQHFGLPKLLFTESKNRFETDYGLKKFCW.

Cu cation-binding residues include Cys126, Glu128, Cys130, His134, and Met137. Glu128 serves as a coordination point for Mg(2+).

Belongs to the cytochrome c oxidase subunit 2 family. As to quaternary structure, component of the cytochrome c oxidase (complex IV, CIV), a multisubunit enzyme composed of a catalytic core of 3 subunits and several supernumerary subunits. The complex exists as a monomer or a dimer and forms supercomplexes (SCs) in the inner mitochondrial membrane with ubiquinol-cytochrome c oxidoreductase (cytochrome b-c1 complex, complex III, CIII). Cu cation serves as cofactor.

It localises to the mitochondrion inner membrane. It catalyses the reaction 4 Fe(II)-[cytochrome c] + O2 + 8 H(+)(in) = 4 Fe(III)-[cytochrome c] + 2 H2O + 4 H(+)(out). Its function is as follows. Component of the cytochrome c oxidase, the last enzyme in the mitochondrial electron transport chain which drives oxidative phosphorylation. The respiratory chain contains 3 multisubunit complexes succinate dehydrogenase (complex II, CII), ubiquinol-cytochrome c oxidoreductase (cytochrome b-c1 complex, complex III, CIII) and cytochrome c oxidase (complex IV, CIV), that cooperate to transfer electrons derived from NADH and succinate to molecular oxygen, creating an electrochemical gradient over the inner membrane that drives transmembrane transport and the ATP synthase. Cytochrome c oxidase is the component of the respiratory chain that catalyzes the reduction of oxygen to water. Electrons originating from reduced cytochrome c in the intermembrane space (IMS) are transferred via the dinuclear copper A center (CU(A)) of subunit 2 and heme A of subunit 1 to the active site in subunit 1, a binuclear center (BNC) formed by heme A3 and copper B (CU(B)). The BNC reduces molecular oxygen to 2 water molecules using 4 electrons from cytochrome c in the IMS and 4 protons from the mitochondrial matrix. This Paramecium primaurelia protein is Cytochrome c oxidase subunit 2 (COII).